Reading from the N-terminus, the 651-residue chain is Acetyl-coenzyme A synthetase (651 aa).

CoA-binding positions include 189-192 (RGGK), threonine 311, and asparagine 335. ATP contacts are provided by residues 387–389 (GEP), 411–416 (DTWWQT), aspartate 500, and arginine 515. Serine 523 is a binding site for CoA. Arginine 526 serves as a coordination point for ATP. Mg(2+) contacts are provided by valine 537, histidine 539, and valine 542. Arginine 586 contacts CoA. Lysine 611 carries the post-translational modification N6-acetyllysine.

It belongs to the ATP-dependent AMP-binding enzyme family. The cofactor is Mg(2+). Post-translationally, acetylated. Deacetylation by the SIR2-homolog deacetylase activates the enzyme.

The enzyme catalyses acetate + ATP + CoA = acetyl-CoA + AMP + diphosphate. Functionally, catalyzes the conversion of acetate into acetyl-CoA (AcCoA), an essential intermediate at the junction of anabolic and catabolic pathways. AcsA undergoes a two-step reaction. In the first half reaction, AcsA combines acetate with ATP to form acetyl-adenylate (AcAMP) intermediate. In the second half reaction, it can then transfer the acetyl group from AcAMP to the sulfhydryl group of CoA, forming the product AcCoA. The protein is Acetyl-coenzyme A synthetase of Brucella melitensis biotype 2 (strain ATCC 23457).